Here is a 51-residue protein sequence, read N- to C-terminus: Magnetosome protein Mms5 (51 aa).

Residues 1–12 (MLSAKGVSLGLG) are Lumenal-facing. The interval 9–16 (LGLGLGLG) is LG region. The chain crosses the membrane as a helical span at residues 13 to 33 (LGLGAWGPVLLGVVGVAGAIA). Residues 34–51 (LYGYYKNRNAEPAAAEAV) are Cytoplasmic-facing.

Belongs to the magnetosome MamD/Mms5 family. Seen in gels as a band of about 5 kDa, with an N-terminus that corresponds to residue 8, suggesting it may undergo N-terminal cleavage.

It localises to the magnetosome membrane. Its function is as follows. Might be involved in magnetite crystal growth. This Paramagnetospirillum magneticum (strain ATCC 700264 / AMB-1) (Magnetospirillum magneticum) protein is Magnetosome protein Mms5.